A 340-amino-acid polypeptide reads, in one-letter code: Ferrochelatase (340 aa).

Residues histidine 189 and glutamate 292 each contribute to the Fe cation site.

This sequence belongs to the ferrochelatase family.

The protein resides in the cytoplasm. The catalysed reaction is heme b + 2 H(+) = protoporphyrin IX + Fe(2+). Its pathway is porphyrin-containing compound metabolism; protoheme biosynthesis; protoheme from protoporphyrin-IX: step 1/1. Its function is as follows. Catalyzes the ferrous insertion into protoporphyrin IX. This is Ferrochelatase from Pseudomonas syringae pv. syringae (strain B728a).